We begin with the raw amino-acid sequence, 264 residues long: Glutamate racemase (264 aa).

Residues 10–11 and 42–43 each bind substrate; these read DS and YG. The active-site Proton donor/acceptor is the Cys73. Residue 74 to 75 coordinates substrate; the sequence is NT. Catalysis depends on Cys183, which acts as the Proton donor/acceptor. 184–185 serves as a coordination point for substrate; the sequence is TH.

Belongs to the aspartate/glutamate racemases family.

The enzyme catalyses L-glutamate = D-glutamate. The protein operates within cell wall biogenesis; peptidoglycan biosynthesis. In terms of biological role, provides the (R)-glutamate required for cell wall biosynthesis. This chain is Glutamate racemase, found in Streptococcus sanguinis (strain SK36).